The sequence spans 306 residues: Ribonuclease Z (306 aa).

7 residues coordinate Zn(2+): H63, H65, D67, H68, H140, D211, and H269. The Proton acceptor role is filled by D67.

This sequence belongs to the RNase Z family. As to quaternary structure, homodimer. Zn(2+) is required as a cofactor.

The enzyme catalyses Endonucleolytic cleavage of RNA, removing extra 3' nucleotides from tRNA precursor, generating 3' termini of tRNAs. A 3'-hydroxy group is left at the tRNA terminus and a 5'-phosphoryl group is left at the trailer molecule.. Zinc phosphodiesterase, which displays some tRNA 3'-processing endonuclease activity. Probably involved in tRNA maturation, by removing a 3'-trailer from precursor tRNA. The chain is Ribonuclease Z from Listeria welshimeri serovar 6b (strain ATCC 35897 / DSM 20650 / CCUG 15529 / CIP 8149 / NCTC 11857 / SLCC 5334 / V8).